A 596-amino-acid polypeptide reads, in one-letter code: Cis-3-hydroxy-L-proline dehydratase (596 aa).

S67 (proton acceptor) is an active-site residue.

The protein belongs to the AcnX family. As to quaternary structure, monomer. Requires Fe(3+) as cofactor.

The enzyme catalyses cis-3-hydroxy-L-proline = 1-pyrroline-2-carboxylate + H2O. Its activity is regulated as follows. Inhibited by Zn(2+). Not inhibited by pyrrole-2-carboxylate nor its derivative 2-thiophenecarboxylate. Its function is as follows. Catalyzes the dehydration of cis-3-hydroxy-L-proline (c3LHyp) to Delta(1)-pyrroline-2-carboxylate (Pyr2C). No activity with L-proline, trans-4-hydroxy-L-proline (t4LHyp), cis-4-hydroxy-L-proline (c4LHyp), trans-3-hydroxy-L-proline (t3LHyp), D-proline, cis-4-hydroxy-D-proline (c4DHyp), trans-4-hydroxy-D-proline (t4DHyp) or L-serine as substrates. Because of the low catalytic efficiency, C3LHyp is likely not a main physiological substrate of this enzyme in H.jecorina. The protein is Cis-3-hydroxy-L-proline dehydratase of Hypocrea jecorina (strain QM6a) (Trichoderma reesei).